We begin with the raw amino-acid sequence, 73 residues long: Putative membrane protein insertion efficiency factor (73 aa).

Belongs to the UPF0161 family.

It is found in the cell inner membrane. In terms of biological role, could be involved in insertion of integral membrane proteins into the membrane. The chain is Putative membrane protein insertion efficiency factor from Parabacteroides distasonis (strain ATCC 8503 / DSM 20701 / CIP 104284 / JCM 5825 / NCTC 11152).